A 459-amino-acid polypeptide reads, in one-letter code: Protein maelstrom (459 aa).

The segment at residues 2-69 is a DNA-binding region (HMG box); the sequence is APKKHSGFMM…AQRAKRESSN (68 aa). The disordered stretch occupies residues 43-78; it reads NTQQRGPYNSGGKDANVAQRAKRESSNGHGQVDKAQ. The segment covering 63-78 has biased composition (basic and acidic residues); sequence AKRESSNGHGQVDKAQ.

The protein belongs to the maelstrom family. As to expression, in germaria and egg chambers, it is detected in the germline. In the germarium, it is in all regions, including region I where the germ cells are dividing. In early egg chambers, it is uniformly distributed throughout the nurse cells and oocyte but, by stage 5, it is most concentrated around the outer margins of the cells, closest to the periphery of the egg chamber. Level decreases in stages 5 and 6, but most noticeably in the oocyte, where protein level remains. No detectable protein from stage 8 onward (at protein level).

The protein localises to the cytoplasm. It is found in the nucleus. Its subcellular location is the perinuclear region. It localises to the cytoplasmic ribonucleoprotein granule. In terms of biological role, involved both in the piRNA and miRNA metabolic processes. As a component of the meiotic nuage, plays a central role during oogenesis by repressing transposable elements and preventing their mobilization, which is essential for the germline integrity. Repression of transposable elements is mediated via the piRNA metabolic process, which mediates the repression of transposable elements during meiosis by forming complexes composed of piRNAs and Piwi proteins and governs the repression of transposons. As a nuclear component, it is required for proper differentiation in the germline stem cell (GSC) lineage by repressing microRNA-7 (miR-7), thereby acting as an indirect regulator of bag-of-marbles (Bam). Acts by binding to the promoter of miR-7 gene and repressing its expression; miR-7 repression alleviates the Bam repression by miR-7, thereby allowing differentiation in the germline stem cell (GSC) lineage. Indirectly required to position the microtubule organizing center in stage 2-6 oocytes. Involved in repression of long interspersed nuclear elements (LINEs) including HeT-A, I-element, TART and possibly mst40 LINEs; may have a role in production of piwi-interacting RNA (piRNA). The polypeptide is Protein maelstrom (Drosophila melanogaster (Fruit fly)).